Consider the following 178-residue polypeptide: PRA1 family protein 2 (178 aa).

Topologically, residues methionine 1 to leucine 41 are cytoplasmic. The helical transmembrane segment at leucine 42–isoleucine 62 threads the bilayer. At arginine 63–proline 64 the chain is on the extracellular side. A helical membrane pass occupies residues leucine 65–alanine 85. The Cytoplasmic portion of the chain corresponds to glutamate 86 to arginine 96. A helical transmembrane segment spans residues serine 97–glycine 119. The Extracellular portion of the chain corresponds to alanine 120–threonine 122. A helical membrane pass occupies residues phenylalanine 123–leucine 140. Over arginine 141–serine 178 the chain is Cytoplasmic.

Belongs to the PRA1 family. Interacts with CCR5 and GDE1.

Its subcellular location is the endosome membrane. In terms of biological role, may be involved in ER/Golgi transport and vesicular traffic. Plays a proapoptotic role in cerulenin-induced neuroblastoma apoptosis. This is PRA1 family protein 2 (Praf2) from Mus musculus (Mouse).